A 61-amino-acid polypeptide reads, in one-letter code: MKGTPSFGKRNKKNHIRCRRCGRNAYNPTKKYCASCGFGRSKRLRRYSWQNKKPVTGKRLK.

Cys18, Cys21, Cys33, and Cys36 together coordinate Zn(2+). A C4-type zinc finger spans residues 18 to 36 (CRRCGRNAYNPTKKYCASC).

This sequence belongs to the eukaryotic ribosomal protein eL37 family. Zn(2+) serves as cofactor.

Binds to the 23S rRNA. The polypeptide is Large ribosomal subunit protein eL37 (Methanosphaera stadtmanae (strain ATCC 43021 / DSM 3091 / JCM 11832 / MCB-3)).